Reading from the N-terminus, the 243-residue chain is Probable transcriptional regulator ycf27 (243 aa).

The Response regulatory domain occupies 7 to 120; it reads KILVVDDEAS…ELEARIRSVL (114 aa). Position 56 is a 4-aspartylphosphate (D56). Residues 76–94 constitute a DNA-binding region (H-T-H motif); that stretch reads DVPIIMLTALGEVCDRITG. Residues 135-236 constitute a DNA-binding region (ompR/PhoB-type); that stretch reads SGIISIGFLK…ARGTGYLFQR (102 aa).

The protein resides in the plastid. It is found in the chloroplast. Probable promoter-specific protein mediating the interaction between DNA and RNA polymerase. The polypeptide is Probable transcriptional regulator ycf27 (ycf27) (Porphyra purpurea (Red seaweed)).